The following is a 193-amino-acid chain: Sporulation-specific transcriptional regulator GerR (193 aa).

The region spanning 1-61 (MTITRQDAWT…RWNSYVRKQY (61 aa)) is the HTH myb-type domain. A DNA-binding region (H-T-H motif) is located at residues 35–57 (FEEVGRALTRTAAACGFRWNSYV). Positions 122–177 (AQEFQLEREKLKEQIQSLQKELEDLRSENQTLRNQLEMTEEDYKALIDIMDRARKM) form a coiled coil.

The protein belongs to the RsfA transcriptional regulator family.

Its function is as follows. Transcriptional factor that regulates the expression of several late sporulation genes. Controls genes of both sigma-E and sigma-K regulons, acting alone on some genes and in conjunction with SpoIIID or GerE on others. Regulates, directly or indirectly, the expression of genes encoding coat proteins such as cgeA, cotB, cotC, cotG, cotU and cotY. Controls late sporulation genes in two ways: directly, by binding to the promoter region of genes such as cotB, cotU and spoVIF, and acting directly on their transcription, and indirectly, through the activation of SpoVIF, which stabilizes the transcriptional activator GerE and consequently induces the expression of the GerE-dependent genes, such as cotC and cotG. Its effect is strongly positive on spoVIF, cotC, and cotG, weakly positive on cotB, and negative on cotU. This is Sporulation-specific transcriptional regulator GerR from Bacillus subtilis (strain 168).